Consider the following 330-residue polypeptide: Beta-1,6-galactofuranosyltransferase WbbI (330 aa).

It localises to the cytoplasm. The protein operates within bacterial outer membrane biogenesis; lipopolysaccharide biosynthesis. Involved in the transfer of galactofuranose (Galf) onto an alpha-D-gluco-configured acceptor substrate to form a beta-1,6-linkage. It uses n-octyl alpha-D-glucopyranoside as an acceptor substrate for the addition of galactofuranose from the donor substrate UDP-galactofuranose. It is not able to use beta-D-glucopyranoside isomers. This chain is Beta-1,6-galactofuranosyltransferase WbbI (wbbI), found in Escherichia coli (strain K12).